Consider the following 233-residue polypeptide: MSIISMKQLLEAGVHFGHQTRRWNPKMAPYIFTERNGIYIIDLQKTVKKVEEAYEFVKSVVADGKEVLFVGTKKQAQEAIEEESLRSGMHFVNNRWLGGMLTNFKTIKTRINKLEQLEKMEEDGTFEVLPKKEVIKLRNEKEKLEKNLGGIKNLDASNLGAIFIVDPRKEKNAIDEAKNLGIPVVAIVDTNCDPDEIDYVIPGNDDAIRAVRLITSKIADAIIEGNQGEQLAE.

It belongs to the universal ribosomal protein uS2 family.

In Clostridium novyi (strain NT), this protein is Small ribosomal subunit protein uS2.